The chain runs to 133 residues: NADPH-dependent 7-cyano-7-deazaguanine reductase (133 aa).

Residue C48 is the Thioimide intermediate of the active site. Residue D55 is the Proton donor of the active site. Substrate contacts are provided by residues 70–72 (VEL) and 89–90 (QE).

It belongs to the GTP cyclohydrolase I family. QueF type 1 subfamily.

It is found in the cytoplasm. The catalysed reaction is 7-aminomethyl-7-carbaguanine + 2 NADP(+) = 7-cyano-7-deazaguanine + 2 NADPH + 3 H(+). It participates in tRNA modification; tRNA-queuosine biosynthesis. Catalyzes the NADPH-dependent reduction of 7-cyano-7-deazaguanine (preQ0) to 7-aminomethyl-7-deazaguanine (preQ1). This is NADPH-dependent 7-cyano-7-deazaguanine reductase from Thermoanaerobacter pseudethanolicus (strain ATCC 33223 / 39E) (Clostridium thermohydrosulfuricum).